Here is an 80-residue protein sequence, read N- to C-terminus: MANYITIAIIVGIVCGQALSVEDVDRNLLELNLPYGRGLDSELQLARLMLAAPRFCHPKRNSELINSLLGLPKNMHNAGK.

An N-terminal signal peptide occupies residues 1 to 20 (MANYITIAIIVGIVCGQALS). Positions 21–58 (VEDVDRNLLELNLPYGRGLDSELQLARLMLAAPRFCHP) are excised as a propeptide. A78 is modified (alanine amide).

This sequence belongs to the arthropod PDH family. Expressed in the brain (at protein level).

It localises to the secreted. Neuropeptide PDF is the main transmitter regulating circadian locomotor rhythms. The sequence is that of Pigment-dispersing hormone peptides from Camponotus floridanus (Florida carpenter ant).